Consider the following 31-residue polypeptide: Cytochrome b6-f complex subunit 6 (31 aa).

The chain crosses the membrane as a helical span at residues 4–24 (ITSYFGFLLAALTITSALFIG).

The protein belongs to the PetL family. In terms of assembly, the 4 large subunits of the cytochrome b6-f complex are cytochrome b6, subunit IV (17 kDa polypeptide, PetD), cytochrome f and the Rieske protein, while the 4 small subunits are PetG, PetL, PetM and PetN. The complex functions as a dimer.

The protein localises to the plastid. It localises to the chloroplast thylakoid membrane. In terms of biological role, component of the cytochrome b6-f complex, which mediates electron transfer between photosystem II (PSII) and photosystem I (PSI), cyclic electron flow around PSI, and state transitions. PetL is important for photoautotrophic growth as well as for electron transfer efficiency and stability of the cytochrome b6-f complex. This is Cytochrome b6-f complex subunit 6 from Hamamelis virginiana (Witch-hazel).